The following is a 622-amino-acid chain: Chromosomal replication initiator protein DnaA (622 aa).

The interval 1–99 (MADVPADLAA…SAGEPPAPPA (99 aa)) is domain I, interacts with DnaA modulators. The segment at 88 to 282 (DDSAGEPPAP…APGPGEPHAR (195 aa)) is disordered. Residues 100–281 (PPMHQSHQGP…PAPGPGEPHA (182 aa)) are domain II. 2 stretches are compositionally biased toward basic and acidic residues: residues 118–137 (QRDD…RPSD) and 176–210 (GYQD…EPWR). Residues 250–262 (PGGHGPGRTGGSV) are compositionally biased toward gly residues. The tract at residues 282–498 (RLNPKYLFDT…GALIRVTAFA (217 aa)) is domain III, AAA+ region. Residues glycine 326, glycine 328, lysine 329, and threonine 330 each contribute to the ATP site. A domain IV, binds dsDNA region spans residues 499–622 (SLNRQPVDLG…TELTNRIKNG (124 aa)).

This sequence belongs to the DnaA family. Oligomerizes as a right-handed, spiral filament on DNA at oriC.

It localises to the cytoplasm. Its function is as follows. Plays an essential role in the initiation and regulation of chromosomal replication. ATP-DnaA binds to the origin of replication (oriC) to initiate formation of the DNA replication initiation complex once per cell cycle. Binds the DnaA box (a 9 base pair repeat at the origin) and separates the double-stranded (ds)DNA. Forms a right-handed helical filament on oriC DNA; dsDNA binds to the exterior of the filament while single-stranded (ss)DNA is stabiized in the filament's interior. The ATP-DnaA-oriC complex binds and stabilizes one strand of the AT-rich DNA unwinding element (DUE), permitting loading of DNA polymerase. After initiation quickly degrades to an ADP-DnaA complex that is not apt for DNA replication. Binds acidic phospholipids. The protein is Chromosomal replication initiator protein DnaA of Streptomyces griseus subsp. griseus (strain JCM 4626 / CBS 651.72 / NBRC 13350 / KCC S-0626 / ISP 5235).